The chain runs to 320 residues: tRNA U34 carboxymethyltransferase (320 aa).

Carboxy-S-adenosyl-L-methionine contacts are provided by residues Lys-89, Trp-103, Lys-108, Gly-128, 150–152 (DPT), 179–180 (IE), Met-194, Tyr-198, and Arg-313.

The protein belongs to the class I-like SAM-binding methyltransferase superfamily. CmoB family. As to quaternary structure, homotetramer.

The enzyme catalyses carboxy-S-adenosyl-L-methionine + 5-hydroxyuridine(34) in tRNA = 5-carboxymethoxyuridine(34) in tRNA + S-adenosyl-L-homocysteine + H(+). Catalyzes carboxymethyl transfer from carboxy-S-adenosyl-L-methionine (Cx-SAM) to 5-hydroxyuridine (ho5U) to form 5-carboxymethoxyuridine (cmo5U) at position 34 in tRNAs. The chain is tRNA U34 carboxymethyltransferase from Glaesserella parasuis serovar 5 (strain SH0165) (Haemophilus parasuis).